Consider the following 3101-residue polypeptide: MVQNTDNNTYDQLIRERNDYDDDAGSSGDVAVIGIGLRFPSGSLKESISKPYQLFNELLNGLDGIVSTFERWFDNYYLNGEIVSKFAGLLPLDEWKQFDPIFFAINPSNDNVSSIDPQQRLLLKCVWEALEDSGIDPISLRGTNTSTFIGSSTIDYCNLQKSPSETQNNIFGSSTHSIANRIGFCFDFRGESLTIDTACSSSSNAINCGYNSIKSNKSNVSIVGGVNFILDPHISKSFTQLGLLSPTGRCHTFSSDADGYVRSEGVGIVVLKKLKDAIKDSNNIYCVIKGSNSNIDGNFDKLNFYSPSKSSQCENIKLAIKSTNGQINESDIDYCETHGTGTPTGDPIELEGISRVFNTTKISSATTITTNNNNKQVLVGSIKSNIGHTEACSGVASLIKCCLMFKNKLFLQNINFKEPNPLINFKEWGLKVVTEPIKFNENKQTVMLINNFGVTGSNVCLILSEFKNNHYGNDYHKMKIDNKFNEKKRYLIPFSSNSSTSLNNYKSSIIKHSNSSSTTTSFKEFVHNQIKFKSTSLIQKSVIIASDWNEFQDESNQIKLNSSDNLISNITVEKKKSPLTVMVLCGQGSQYNKMALSLYDNEPIFRESVNRFDKELFKYYGYSVLDKLRSIDDKDLISIHQPILAQPANIMIQVSLYELYKHWGVSADIIIGHSLGEVSSAYCSGMIDFETLCYLTYHRSVAQNRTTGTGRMLSVNISSDEFINNYQSTTKYESLEIACYNSPTSIVIAGKEDLLNEITNEFKSNDIFCSMLGSLSSFHTSSQQMIKDEVCSLNISSKQPSIAVFSTVTTNLFNHQTSPFNANYVFDNIIQPVYFTQTITNLYKHIESNDMGNEITFIEVSPHPTLQYYLNQMKSTQSSYFNNGKNITIYSPLNKKKNDYNEFLKTISLLYVNNNFDINFKSQLINNNNSNNNYENQLNNLPLYQWDDKEYFKLNSSLEKIKSEGPSINNLGNNTDSPYPSYQTFIDIKKSPFQWLKGHQVSDKFYYPGMGYVHNLLSIYPNQDITISSLEFKSPLVLTEGNNQCLQTIITPLSKNEFNIKSHYKDQKTNQWILSSLGNFSLTKHNSIISNKLINIQSLKDKCNFTSISKQDLYETIRIKTNLTYKGLFQGVKQCHIGNNCSLAIVSLNEIYNQKEYNHLINNTNMNSFFNAAILDTCLHGSLVAVTQPVVLDRIEGFKYYSSNIPSFKNGNNNDDDEESNNNNNNNNNNNNNNNNNIKELYVFSDIKSRTNSQTYSISVKIILPNGTLLVDISNVVCTLVSLPNPESAIICKPPSNDIYTPYLQSKDSVINKPEQFKHLYRVDEFSVNEEDNQFISNELLLSLFYKHINNRCPSINLESLTTLEYNQFKQLYYNSSVNENLFKFIFENLKRYSNILNHDNNHSNIKSENEELYIRTTKIMAKQLFPLKDDDSITDTPQSLFESGFLDDFYKNSRVVQPLNNLLSEIIVETLKPILNEPIVFRILEAGGGTGSLSLLILEKICKLLNDNSTTSIINIEFTWSDISASFFAEIKEKFSSFTNHNNLNIIYRVLDLEKPLLDQDLKASYYDFVVMSNVMHVVKKLKPTLNEIHNILTPNGQLMFIEPPYKSFYYDSIFGCFSQWWPSYDSDIELRPDRCCMKQEKWINLLNQCNYRDTIMSGNDNLVFLIQTRKPTINEIISEQSISLDQLNSFNNIILFSNNNNSNDKNRNSCSSSILDLIRLNQELKHKIININNYNEFQSWITNNQNKDGCNKTLIIFLKSIESKMNTFNFKEITFEYIQINQLILKLELSNNFKHLLLSLNSTTDNYLSSSIVGAARYFVEFPQLDLYILNYDNVSIENNQQLSLINYLINPNNNIQKEFTINNNKVYYERYCRRSNNIKSIFQSESFETNKDNLYIQLNSNLEYQLYSKKDELNSNEVEIEIKANGINYKDYLMYIGMIGSDLDIKYGKEYEIENGIGIDNPNIGNDFSGIITRLGSNVKKFKVGDQVCGVGSKTNSSHVIVDYNYIYYKPLNYNHSVSASIPSIYITSLHSIYSIGNLKSNESILIHSAAGGIGISSLDLLKSKQHQGYIFLTVGSKDKEEYLTKKYGSLITAIYSSRNKDYVYEIKNKLIELSVVEQHQQGVDLILNTLSSEYMDSNFQCLNLSGRIVDLSITHLTPNDYMINNHYKFNMGYNNVEVVDFPSKLFKGYLKKIIKMANSNKLELSVPIIEYSNNQFKDAIEYINQRKHIGKIIVNHNQDEFNRVYNNYQNNNNHIIMKHSYDISKLNIGKNILLTGQTGIVLEILKYLIKYSNHSIENIIILSKSKLKWELELLINQSKFKKDNNIKFHFNQIDIEDSNKVNQVLNQLELNENITNIDSIIHFAFMNDIGDVQQVDMNRLNNTHGAKTIGAINLHNQSINRSWNIKQFIMASSVVSIFGSDQQCCYVSACSVIDSLSKYRHSIGLPSLAINLGAISSTGFVSRNNAIETMLKSSILNLFSPQLVISSLDLFIQNQHQYPNYCLSDFNFEILPSTLTNHFLKKFDYQINIVKKSNQIKSSSGGNGGDNNEIIRSTILNKISELLSIDESKINEDLQLTQYGMDSLVIVQLKNFIDNQLGHNIITIQQLQNNKINQSIEIIKSANNKNNKNNNNNNNNKTNKNNNNLVKKEQQSLDEFIKHETKLNESIISRPYSIKNILNNNNNKSIFLTGSTGFLGAYLLTELIKMKNVSKIYCLIRNNSKLTNPIDAIINNLKKHQLINMNKESPNQRSSKILNHTGNISNDKLSIIENSENNNKQIREDQLIKIIPMIGDISKDKFGLTEQDYLKLSNECDIIINSAADLNLKSNYEESKTVNVDSINQVIKLSVSNNSSQKLIVHFSSIAVFINHQLKDGETFEETNILPNFDTTPVGYIQSKVISEKLLTNAAESRGIPSIIIRPPDIFSNPITGIGHSNDFISLFLKVSKEIGYYPNIHKPIFTTPVTTIAKTTIDLIFNENSWNQNKSKPISIYSLNGNSIEMKSIYEFLENKFNCKEIDYQEWIKLVSKSNGKSSKRYSAFHIHDNQNLLISNFKINSLFKMSNSTKELLISIGSYNHQDWEINESIILNNINNNNKEIK.

Positions 27–465 (SGDVAVIGIG…GSNVCLILSE (439 aa)) constitute a Ketosynthase family 3 (KS3) domain. Catalysis depends on for beta-ketoacyl synthase activity residues Cys199, His338, and His388. Residues 664-697 (GVSADIIIGHSLGEVSSAYCSGMIDFETLCYLTY) are acyl/malonyl transferase. Ser674 (for acyl/malonyl transferase activity) is an active-site residue. The interval 965-1087 (GPSINNLGNN…GNFSLTKHNS (123 aa)) is N-terminal hotdog fold. Positions 965–1287 (GPSINNLGNN…CTLVSLPNPE (323 aa)) constitute a PKS/mFAS DH domain. His999 serves as the catalytic Proton acceptor; for dehydratase activity. Residues 1104 to 1287 (NFTSISKQDL…CTLVSLPNPE (184 aa)) are C-terminal hotdog fold. Asp1176 serves as the catalytic Proton donor; for dehydratase activity. The segment at 1209-1236 (KNGNNNDDDEESNNNNNNNNNNNNNNNN) is disordered. A compositionally biased stretch (low complexity) spans 1221–1236 (NNNNNNNNNNNNNNNN). One can recognise a Carrier domain in the interval 2550-2627 (DNNEIIRSTI…QSIEIIKSAN (78 aa)). Ser2587 is modified (O-(pantetheine 4'-phosphoryl)serine). The interval 2627–2648 (NNKNNKNNNNNNNNKTNKNNNN) is disordered.

Pantetheine 4'-phosphate serves as cofactor.

Probable polyketide synthase. The sequence is that of Probable polyketide synthase 32 (pks32) from Dictyostelium discoideum (Social amoeba).